Here is a 403-residue protein sequence, read N- to C-terminus: F-box/kelch-repeat protein At5g39560 (403 aa).

The F-box domain maps to 26–72; that stretch reads PPSLMSLPYEIIENILARISKWSYPNLSLVSKSFLSLLSSPQLYKTR. Kelch repeat units lie at residues 138–182, 184–229, 248–294, and 296–340; these read EIYV…LIDQ, IYVL…VWPN, NPNA…IENV, and YACH…VNYG.

This is F-box/kelch-repeat protein At5g39560 from Arabidopsis thaliana (Mouse-ear cress).